The following is a 241-amino-acid chain: uncharacterized protein (241 aa).

Residues 147–212 (FSYRSVILTL…EMYAWINSAQ (66 aa)) enclose the HTH luxR-type domain.

This is an uncharacterized protein from Escherichia coli O157:H7.